The primary structure comprises 122 residues: Large ribosomal subunit protein uL14 (122 aa).

This sequence belongs to the universal ribosomal protein uL14 family. As to quaternary structure, part of the 50S ribosomal subunit. Forms a cluster with proteins L3 and L19. In the 70S ribosome, L14 and L19 interact and together make contacts with the 16S rRNA in bridges B5 and B8.

Its function is as follows. Binds to 23S rRNA. Forms part of two intersubunit bridges in the 70S ribosome. This Staphylococcus epidermidis (strain ATCC 35984 / DSM 28319 / BCRC 17069 / CCUG 31568 / BM 3577 / RP62A) protein is Large ribosomal subunit protein uL14.